Consider the following 2611-residue polypeptide: MGSTHNEWESEPIAIIGLSCKFAGDASNPEKLWDMLAEGRNAWSEVPSSRFNPKAVYHPDSEKLSTTHVKGAHFIDEDIGLFDAAFFNFSAETAAIAGSNTSVYAGVFTHDYHEGLIRDEDRLPRFLPIGTLSAMSSNRISHFFDLKGASMTVDTGCSTALVALHQAVLGLRTGEADMSIVSGCNLMLSPDMFKVFSSLGMLSPDGKSYAFDSRANGYGRGEGVASIVIKRLKDAVEAGDPVRAVIRESFLNQDGKTETITSPSQAAQEALIRECYRRAGLSPHDTQYFEAHGTGTPTGDPIEARSIAAVFGQDRSEPLRIGSVKTNIGHTEAASGLAGLIKVVLAMEKGQIPPSVNFQKPNPKLQLDEWRLKVATELEPWPAASDQPWRASVNNFGYGGTNSHVIVEGVGSLASLLPRKQLTNGIHHAVDSKADVKTQSKVLVFSGRDEQACQRMVSNTKEYLERRKLQDPGMTADKINELMQNLAWTLTQHRSRFAWVSAHAVKYSDNLDQVIQGLDAPQFKPVKVATTPARIGMVFTGQGAQWHAMARELIDPYPVFRSSLYEAERYLRDIGADWSLTAELMRDAATTRVNDTGLSIPICVAVQIALVRLLRSWGIVPSAVTSHSSGEIAAAYTVGALTLRQAMAVAYYRAAMAADKTLRGADGGPKGAMVAVGVGKEAAEGYLHKLPSTSGKAVVACINSPSSITIAGDEAAVQEVEALATADGVFARRLKVDTGYHSHHMDPVAEPYRQALRTALAQKDSDEGQALPDKVDGEPWAGAYRAALHEALPDAIEKGSLDSIIFSSPVTGGRVTRAEVLADPEHWVRSLVQPVRFVEAFTDMTVGGNGEQERSNVDVILEVGPHTALGGPIKEILSLPEFEGITLPYMGCLVRKEDARDCMLAAAVNLLGKGQPANLTRINFPWGLQGPAKPRVLTDMPSYPWNHSNRHWNESRRNQAYRQRSQEPHDLLGVLVPGTNPDAASWRHIVRLSEAPWLRDHVVQGNILYPGAGFVCLAIEAIKMQTAMASATPDAGELAGFKLRDVEIHQALVIADTADGVEVQTILRPVDGKTIGARGWKQFEIWSVTADSEWTEHARGLITVQMAADTAKTNATSHSSASFLDESGYTRRIDPQDMFASLRAKGLNHGPMFQNTVSILQDGRAKEPRCVVTIKVADTSSPKDKGRDLQNVLHPTTLDSIVLSSYAAVPSADPSNDDSARVPRSIRKLWVSNRISNTPGHVFTCNVKMPHHDAQSYEANVSVLDQDGTSEVEPLLEMQGLVCQSLGRSAPGEDKEPWNKELCANVEWGPDLALSLGLPGAQDAIDKRLNTLRDEVAGTDSRSIEVQTVLRRVCVYFSHDALEALTETDVANLASHHVKFYKWMKDTVSLAASRRWSAESDTWTSDPPAVRQHYIDLAAKQSVDGELICHLGPLLLPILRGERAPLEVMMEDRLLYKYYANAYRLEPAFGQLKSLLAAVLHKNPRARVLEIGAGTGAATRHALKTLGTDEDGGPRCESWHFTDISSGFFEAARTEFSAWGNLLEFDRLDIEQSPEAQGFKLASYDVVVACQVLHATKSMARTMSNVRSLMKPGATLLLMETTQDQIDLQFIFGLLPGWWLSEEPERHSSPSLSIGMWDRVLKGAGFTGVEIDLRDVNVDAESDLYGISNILSTAASPSPELDSSRVVIVTSDKAPPQSGWLETLRKSIAQVAGNRVLPDVLALESPGLTAATYTGKLCVFVGELDKPVLAGLDAADLQGLKTMALGCKGLLWITRGGAVECTDPESALASGFVRVLRTEYLGRRFLTLDLDPRTAEMDTAAIVQVLKSCLAASDAPAPIESEFAVRDGLILVPRLYKDVVWNALLEPEVPDWASPETIPEGPLFQPKRPLRLEVGIPGLLDTLAFGDDDGVAADLPDDMVEIEPRAYGLNFRDVMVAMGQLRERVMGLECAGIITRVGSEAAAQGFAVGDHVMALLLGPFSSRPRITWHGVINMPQGMSFSDAASIPMIFTTAYVALVQVARLRHGQSVLIHAAAGGVGQAAVMLAQDYLGAEVYATVGSQEKRDLLTREYGIPPERIFNSRDASFAPAVLAATGGRGVDAVLNSLGGSLLQASFEVLAPFGNFVEIGKRDLEQNSLLEMATFTRAVSFTSLDMMTLLRQRGPEAHRILSELARLAGQKIIKPVHPVTVYPMGQVDKAFRLLQTGKHLGKLVLSTEPEEQVKVLPRPATPKLRSDASYLLVGGVGGLGRSLANWMVDHGARNLILLSRSAGKQDTSAFVAQLREAGSRVAAISCDVSDKEDLAKALRICEHDLHFPPVRGVIQGAMVLQDSILEQMTIDDWQAAIRPKVAGTWNLHERFSQRGSLDFFVMLSSLSCILGWASQASYAAGGTYQDALARWRCASGLPAVSLDMGVIKDVGYVAESRTVSDRLRKVGQSLRLSEESVLQTLATAVLHPFGRPQVLLGLNSGPGSHWDPASDSQMGRDARFMPLRYRKPAASRAQAQQAGGDSDSEPLSAKLRTAESSDAAARCVGDAIATKLADIFMVPVDDIDLSKPPSAYGVDSLVAVELRNMLVLQAACDVSIFSILQSASLAALALDVVAKSAHVEIAA.

Residues 10 to 409 form the Ketosynthase family 3 (KS3) domain; it reads SEPIAIIGLS…GTNSHVIVEG (400 aa). Residues Cys-157, His-292, and His-330 each act as for beta-ketoacyl synthase activity in the active site. A malonyl-CoA:ACP transacylase (MAT) domain region spans residues 537-844; sequence MVFTGQGAQW…VRFVEAFTDM (308 aa). Positions 969 to 1109 are N-terminal hotdog fold; sequence HDLLGVLVPG…GLITVQMAAD (141 aa). In terms of domain architecture, PKS/mFAS DH spans 969-1292; sequence HDLLGVLVPG…CQSLGRSAPG (324 aa). The tract at residues 970 to 1289 is dehydratase (DH) domain; it reads DLLGVLVPGT…GLVCQSLGRS (320 aa). Catalysis depends on His-1001, which acts as the Proton acceptor; for dehydratase activity. Residues 1128–1292 are C-terminal hotdog fold; it reads GYTRRIDPQD…CQSLGRSAPG (165 aa). Asp-1199 functions as the Proton donor; for dehydratase activity in the catalytic mechanism. The interval 1469–1602 is methyltransferase (CMet) domain; it reads FGQLKSLLAA…GATLLLMETT (134 aa). The enoyl reductase (ER) domain stretch occupies residues 1898-2213; sequence GLLDTLAFGD…TGKHLGKLVL (316 aa). The tract at residues 2236–2416 is ketoreductase (KR) domain; sequence ASYLLVGGVG…AVSLDMGVIK (181 aa). Over residues 2499–2509 the composition is skewed to low complexity; sequence SRAQAQQAGGD. The disordered stretch occupies residues 2499 to 2520; that stretch reads SRAQAQQAGGDSDSEPLSAKLR. The region spanning 2527-2604 is the Carrier domain; it reads AAARCVGDAI…ALALDVVAKS (78 aa). The residue at position 2564 (Ser-2564) is an O-(pantetheine 4'-phosphoryl)serine.

It functions in the pathway secondary metabolite biosynthesis. Its function is as follows. Highly reducing polyketide synthase; part of the cluster B that mediates the biosynthesis of azasperpyranones, members of the azaphilone family that exhibit anti-cancer activities. Azasperpyranones are synthesized by 2 clusters, A and B. Cluster A is responsible for the production of the polyhydric phenol moiety while the azaphilonoid scaffold is produced by the cluster B. The non-reducing polyketide synthase ATEG_03629 produces 5-methyl orsellinic acid, which is then reduced to 5-methyl orsellinic aldehyde by the NRPS-like protein ATEG_03630. 5-methyl orsellinic aldehyde is then first hydroxylated by the FAD-dependent monooxygenase ATEG_03635 and subsequently hydroxylated by the cytochrome P450 monooxygenase ATEG_03631 to produce the unstable polyhydric phenol precursor of azasperpyranones. On the other hand, the polyketide synthase ATEG_07659 is responsible for producing the 3,5-dimethyloctadienone moiety from acetyl-CoA, three malonyl-CoA, and two S-adenosyl methionines (SAM). The 3,5-dimethyloctadienone moiety is then loaded onto the SAT domain of ATEG_07661 and extended with four malonyl-CoA and one SAM, which leads to the formation of 2,4-dihydroxy-6-(5,7-dimethyl-2-oxo-trans-3-trans-5-nonadienyl)-3-methylbenzaldehyde (compound 8) after reductive release and aldol condensation. The FAD-dependent monooxygenase ATEG_07662 is the next enzyme in the biosynthesis sequence and hydroxylates the side chain at the benzylic position of compound 8. In Aspergillus nidulans, afoF, the ortholog of the FAD-dependent oxygenase ATEG_07660, is the key enzyme for the biosynthesis of asperfuranone by catalyzing the hydroxylation at C-8 of to prevent the formation of a six-membered ring hemiacetal intermediate and thus facilitating the formation of a five-membered ring to produce asperfuranone. In Aspergillus terreus, ATEG_07660 is probably not functional, which leads to the formation of the six-membered ring hemiacetal intermediate presperpyranone instead of asperfuranone. Finally, ATEG_03636 is involved in the condensation of the polyhydric phenol moiety produced by cluster A and the perasperpyranone precursor produced by cluster B, to yield azasperpyranone A. Further modifications of azasperpyranone A result in the production of derivatives, including azasperpyranone B to F. The sequence is that of Highly reducing polyketide synthase ATEG_07659 from Aspergillus terreus (strain NIH 2624 / FGSC A1156).